A 384-amino-acid polypeptide reads, in one-letter code: Probable protein phosphatase 2C 42 (384 aa).

Residues 58-358 form the PPM-type phosphatase domain; it reads DFSMAVIQAN…DDITVIVVFL (301 aa). Mn(2+) is bound by residues Asp89, Gly90, Asp290, and Asp349.

It belongs to the PP2C family. Requires Mg(2+) as cofactor. It depends on Mn(2+) as a cofactor.

It catalyses the reaction O-phospho-L-seryl-[protein] + H2O = L-seryl-[protein] + phosphate. The catalysed reaction is O-phospho-L-threonyl-[protein] + H2O = L-threonyl-[protein] + phosphate. Its function is as follows. Dephosphorylates and represses plasma membrane H(+)-ATPases (PM H(+)-ATPases, e.g. AHA1 and AHA2), thus influencing negatively plant growth and fitness. Promotes the apical hook maintenance of etiolated seedlings. In Arabidopsis thaliana (Mouse-ear cress), this protein is Probable protein phosphatase 2C 42.